The chain runs to 443 residues: Probable nitrate/nitrite antiporter NarK2 (443 aa).

The next 12 helical transmembrane spans lie at 32–52 (ITTF…ALVV), 66–86 (LFWL…IWTF), 95–115 (HLVT…GFAV), 123–143 (WVLL…SGYM), 172–192 (IVQF…LLGG), 210–230 (NATF…WVYL), 256–276 (SLYI…PLLI), 292–312 (YAFL…PISD), 314–334 (LGGA…ALLV), 346–366 (FPMF…GNAS), 383–403 (VIGW…TLAA), and 409–429 (TGGF…NFFL).

The protein belongs to the major facilitator superfamily. Nitrate/nitrite porter (TC 2.A.1.8) family.

It is found in the cell membrane. The catalysed reaction is nitrate(in) + nitrite(out) = nitrate(out) + nitrite(in). Probable nitrate/nitrite antiporter that may be involved in nitrate import and nitrite export during anaerobic growth. The sequence is that of Probable nitrate/nitrite antiporter NarK2 from Thermus thermophilus.